The sequence spans 542 residues: CTP synthase (542 aa).

The interval 1–265 (MARYVFITGG…DSEVLAAFGI (265 aa)) is amidoligase domain. Serine 13 contributes to the CTP binding site. Serine 13 provides a ligand contact to UTP. 14–19 (SLGKGI) contacts ATP. Residue tyrosine 54 participates in L-glutamine binding. Aspartate 71 is an ATP binding site. Positions 71 and 139 each coordinate Mg(2+). Residues 146–148 (DIE), 186–191 (KTKPTQ), and lysine 222 each bind CTP. UTP-binding positions include 186–191 (KTKPTQ) and lysine 222. The Glutamine amidotransferase type-1 domain occupies 291–541 (TIAIVGKYTG…IAAAVEQSRL (251 aa)). Glycine 353 contacts L-glutamine. Cysteine 380 serves as the catalytic Nucleophile; for glutamine hydrolysis. L-glutamine contacts are provided by residues 381-384 (FGMQ), glutamate 404, and arginine 469. Active-site residues include histidine 514 and glutamate 516.

Belongs to the CTP synthase family. As to quaternary structure, homotetramer.

The enzyme catalyses UTP + L-glutamine + ATP + H2O = CTP + L-glutamate + ADP + phosphate + 2 H(+). The catalysed reaction is L-glutamine + H2O = L-glutamate + NH4(+). It carries out the reaction UTP + NH4(+) + ATP = CTP + ADP + phosphate + 2 H(+). The protein operates within pyrimidine metabolism; CTP biosynthesis via de novo pathway; CTP from UDP: step 2/2. Its activity is regulated as follows. Allosterically activated by GTP, when glutamine is the substrate; GTP has no effect on the reaction when ammonia is the substrate. The allosteric effector GTP functions by stabilizing the protein conformation that binds the tetrahedral intermediate(s) formed during glutamine hydrolysis. Inhibited by the product CTP, via allosteric rather than competitive inhibition. Its function is as follows. Catalyzes the ATP-dependent amination of UTP to CTP with either L-glutamine or ammonia as the source of nitrogen. Regulates intracellular CTP levels through interactions with the four ribonucleotide triphosphates. This Chelativorans sp. (strain BNC1) protein is CTP synthase.